The primary structure comprises 249 residues: Proteasome subunit alpha type-7-1 (249 aa).

Residue serine 177 is modified to Phosphoserine.

It belongs to the peptidase T1A family. As to quaternary structure, the 26S proteasome consists of a 20S proteasome core and two 19S regulatory subunits. The 20S proteasome core is composed of 28 subunits that are arranged in four stacked rings, resulting in a barrel-shaped structure. The two end rings are each formed by seven alpha subunits, and the two central rings are each formed by seven beta subunits. The catalytic chamber with the active sites is on the inside of the barrel. Interacts with PI31; this interaction is reduced by PI31 ADP-ribosylation.

The protein resides in the cytoplasm. The protein localises to the nucleus. Its function is as follows. The proteasome is a multicatalytic proteinase complex which is characterized by its ability to cleave peptides with Arg, Phe, Tyr, Leu, and Glu adjacent to the leaving group at neutral or slightly basic pH. The proteasome has an ATP-dependent proteolytic activity. The polypeptide is Proteasome subunit alpha type-7-1 (Prosalpha4) (Drosophila melanogaster (Fruit fly)).